Here is a 530-residue protein sequence, read N- to C-terminus: Autoinducer-2 kinase (530 aa).

Belongs to the FGGY kinase family.

It is found in the cytoplasm. It carries out the reaction (S)-4,5-dihydroxypentane-2,3-dione + ATP = (2S)-2-hydroxy-3,4-dioxopentyl phosphate + ADP + H(+). Catalyzes the phosphorylation of autoinducer-2 (AI-2) to phospho-AI-2, which subsequently inactivates the transcriptional regulator LsrR and leads to the transcription of the lsr operon. Phosphorylates the ring-open form of (S)-4,5-dihydroxypentane-2,3-dione (DPD), which is the precursor to all AI-2 signaling molecules, at the C5 position. The polypeptide is Autoinducer-2 kinase (Salmonella choleraesuis (strain SC-B67)).